A 170-amino-acid polypeptide reads, in one-letter code: RNA pyrophosphohydrolase (170 aa).

One can recognise a Nudix hydrolase domain in the interval 9–162 (PYRPCAGIMV…KRAVYEKVVA (154 aa)). Residues 50–71 (GGIDDGERPLTAAIRELYEETG) carry the Nudix box motif.

The protein belongs to the Nudix hydrolase family. RppH subfamily. The cofactor is a divalent metal cation.

Its function is as follows. Accelerates the degradation of transcripts by removing pyrophosphate from the 5'-end of triphosphorylated RNA, leading to a more labile monophosphorylated state that can stimulate subsequent ribonuclease cleavage. The sequence is that of RNA pyrophosphohydrolase from Agrobacterium fabrum (strain C58 / ATCC 33970) (Agrobacterium tumefaciens (strain C58)).